The sequence spans 689 residues: Translation initiation factor IF-2 (689 aa).

The interval 70-107 is disordered; that stretch reads VRSKKNSNKKKKKGKGNQDKRQENFAGKQQAQTVETPD. The segment covering 71–84 has biased composition (basic residues); it reads RSKKNSNKKKKKGK. The 170-residue stretch at 191–360 folds into the tr-type G domain; sequence ERPAVVTIMG…LLVSEVEEYK (170 aa). A G1 region spans residues 200 to 207; that stretch reads GHVDHGKT. A GTP-binding site is contributed by 200 to 207; sequence GHVDHGKT. The segment at 225 to 229 is G2; sequence GITQH. The interval 246–249 is G3; the sequence is DTPG. GTP-binding positions include 246–250 and 300–303; these read DTPGH and NKMD. Residues 300–303 form a G4 region; that stretch reads NKMD. Residues 336 to 338 are G5; it reads SAI.

This sequence belongs to the TRAFAC class translation factor GTPase superfamily. Classic translation factor GTPase family. IF-2 subfamily.

Its subcellular location is the cytoplasm. Its function is as follows. One of the essential components for the initiation of protein synthesis. Protects formylmethionyl-tRNA from spontaneous hydrolysis and promotes its binding to the 30S ribosomal subunits. Also involved in the hydrolysis of GTP during the formation of the 70S ribosomal complex. In Bacillus cytotoxicus (strain DSM 22905 / CIP 110041 / 391-98 / NVH 391-98), this protein is Translation initiation factor IF-2.